The following is a 284-amino-acid chain: 2,3,4,5-tetrahydropyridine-2,6-dicarboxylate N-succinyltransferase (284 aa).

Positions 111 and 148 each coordinate substrate.

It belongs to the transferase hexapeptide repeat family. In terms of assembly, homotrimer.

Its subcellular location is the cytoplasm. The enzyme catalyses (S)-2,3,4,5-tetrahydrodipicolinate + succinyl-CoA + H2O = (S)-2-succinylamino-6-oxoheptanedioate + CoA. The protein operates within amino-acid biosynthesis; L-lysine biosynthesis via DAP pathway; LL-2,6-diaminopimelate from (S)-tetrahydrodipicolinate (succinylase route): step 1/3. The chain is 2,3,4,5-tetrahydropyridine-2,6-dicarboxylate N-succinyltransferase from Brucella suis (strain ATCC 23445 / NCTC 10510).